The chain runs to 619 residues: ESX-2 secretion system protein EccA2 (619 aa).

Residue 373–380 participates in ATP binding; the sequence is GPPGTGKT.

Belongs to the CbxX/CfxQ family. As to quaternary structure, part of the ESX-2 / type VII secretion system (T7SS), which is composed of cytosolic and membrane components.

Its subcellular location is the cytoplasm. Part of an ESX-2 / type VII specialized secretion system (T7SS), which exports several proteins. May have ATPase activity and might provide energy for the export of ESX-2 substrates. The sequence is that of ESX-2 secretion system protein EccA2 from Mycobacterium bovis (strain ATCC BAA-935 / AF2122/97).